The sequence spans 185 residues: MIVPINIYSDDVLRQQALPLEGVDKEVEELLGNMFETMYSAPGIGLAAPQVGRSLRLLVLDISCMREYANVKPMVVINPEIVAVKGYRSMEEGCLSLPGLQGDVVRPSSISLNYRDEHFEGQNAEFSGLLARVLQHEIDHLDGRLFVDRLQKKERRKVQKELDALASGRFIASYPVVLPVKVNKA.

2 residues coordinate Fe cation: C94 and H136. E137 is a catalytic residue. Residue H140 coordinates Fe cation.

This sequence belongs to the polypeptide deformylase family. Fe(2+) is required as a cofactor.

It catalyses the reaction N-terminal N-formyl-L-methionyl-[peptide] + H2O = N-terminal L-methionyl-[peptide] + formate. Functionally, removes the formyl group from the N-terminal Met of newly synthesized proteins. Requires at least a dipeptide for an efficient rate of reaction. N-terminal L-methionine is a prerequisite for activity but the enzyme has broad specificity at other positions. In Chlorobium limicola (strain DSM 245 / NBRC 103803 / 6330), this protein is Peptide deformylase.